Consider the following 392-residue polypeptide: Pannexin-3 (392 aa).

At 1–39 the chain is on the cytoplasmic side; it reads MSLAHTAAEYMLSDALLPDRRGSRLKGLRLELPLDKMVK. The helical transmembrane segment at 40 to 60 threads the bilayer; the sequence is FVTVGFPLLLMSLAFAQEFSS. The Extracellular segment spans residues 61 to 113; sequence GSPISCFSPSNFSVRQAVFVDSSCWDSLAHYKQDEAGQYTVKSLWPHKALPYS. N-linked (GlcNAc...) asparagine glycosylation is present at N71. A helical membrane pass occupies residues 114-134; that stretch reads LLALAVAMYLPVLLWQYAAVP. The Cytoplasmic segment spans residues 135–215; it reads ALSSDLLFII…VATYLLRNAL (81 aa). The chain crosses the membrane as a helical span at residues 216-236; it reads LLLFTSATYLYLGHFHLDVFF. Residues 237-267 lie on the Extracellular side of the membrane; sequence QEEFSCSIKTGLLHEETHVPELITCRLTSLS. A helical transmembrane segment spans residues 268 to 288; it reads VFQIVSVSSVAIYTVLVPVII. The Cytoplasmic segment spans residues 289–392; sequence YNLTRLCRWD…LTQHTYDEHP (104 aa).

Belongs to the pannexin family. Homoheptameric. As to expression, skin.

The protein localises to the cell membrane. It is found in the cell junction. The protein resides in the gap junction. It localises to the endoplasmic reticulum membrane. It catalyses the reaction Ca(2+)(in) = Ca(2+)(out). The catalysed reaction is ATP(in) = ATP(out). Regulator of osteoblast differentiation by functionning as a Ca(2+) channel in the endoplasmic reticulum which regulates calmodulin (CaM) pathways. Allows ATP release into the extracellular space and activation or purinergic receptors. The protein is Pannexin-3 (Panx3) of Rattus norvegicus (Rat).